The chain runs to 75 residues: UPF0352 protein YPTB1297 (75 aa).

The protein belongs to the UPF0352 family.

The chain is UPF0352 protein YPTB1297 from Yersinia pseudotuberculosis serotype I (strain IP32953).